We begin with the raw amino-acid sequence, 190 residues long: dTTP/UTP pyrophosphatase (190 aa).

Residue Asp69 is the Proton acceptor of the active site.

This sequence belongs to the Maf family. YhdE subfamily. It depends on a divalent metal cation as a cofactor.

The protein localises to the cytoplasm. It catalyses the reaction dTTP + H2O = dTMP + diphosphate + H(+). The catalysed reaction is UTP + H2O = UMP + diphosphate + H(+). Functionally, nucleoside triphosphate pyrophosphatase that hydrolyzes dTTP and UTP. May have a dual role in cell division arrest and in preventing the incorporation of modified nucleotides into cellular nucleic acids. This chain is dTTP/UTP pyrophosphatase, found in Sphingopyxis alaskensis (strain DSM 13593 / LMG 18877 / RB2256) (Sphingomonas alaskensis).